We begin with the raw amino-acid sequence, 245 residues long: Zinc finger protein AZF1 (245 aa).

The segment covering 1–15 (MALETLNSPTATTTA) has biased composition (polar residues). Disordered stretches follow at residues 1–57 (MALE…NKNL) and 112–141 (LGGHKTSHRKPTNTSITSGNQELSNNSHSN). Residues 97 to 119 (YKCTVCGKSFSSYQALGGHKTSH) form a C2H2-type 1 zinc finger. Over residues 123-134 (TNTSITSGNQEL) the composition is skewed to polar residues. Residues 164 to 186 (HTCSICFKSFASGQALGGHKRCH) form a C2H2-type 2 zinc finger. Residues 193–231 (GNGNGSSSNSVELVAGSDVSDVDNERWSEESAIGGHRGF) are disordered.

In terms of tissue distribution, highly expressed in roots and at lower levels in leaves and stems.

Its subcellular location is the nucleus. Functionally, transcriptional repressor involved in the inhibition of plant growth under abiotic stress conditions. Can repress the expression of various genes, including osmotic stress and abscisic acid-repressive genes and auxin-inducible genes, by binding to their promoter regions in a DNA sequence-specific manner. This chain is Zinc finger protein AZF1 (AZF1), found in Arabidopsis thaliana (Mouse-ear cress).